A 152-amino-acid polypeptide reads, in one-letter code: Transcriptional repressor NrdR (152 aa).

Residues 3–34 fold into a zinc finger; the sequence is CPFCNHGELKVIDSRNSPEANAIKRRRECLRC. The region spanning 48-138 is the ATP-cone domain; it reads IQVLKRDGRY…VYRRFRDVGE (91 aa).

This sequence belongs to the NrdR family. It depends on Zn(2+) as a cofactor.

Functionally, negatively regulates transcription of bacterial ribonucleotide reductase nrd genes and operons by binding to NrdR-boxes. The polypeptide is Transcriptional repressor NrdR (Chlamydia muridarum (strain MoPn / Nigg)).